A 149-amino-acid chain; its full sequence is D-aminoacyl-tRNA deacylase (149 aa).

The Gly-cisPro motif, important for rejection of L-amino acids signature appears at 137–138; sequence GP.

It belongs to the DTD family. As to quaternary structure, homodimer.

It is found in the cytoplasm. It catalyses the reaction glycyl-tRNA(Ala) + H2O = tRNA(Ala) + glycine + H(+). The enzyme catalyses a D-aminoacyl-tRNA + H2O = a tRNA + a D-alpha-amino acid + H(+). In terms of biological role, an aminoacyl-tRNA editing enzyme that deacylates mischarged D-aminoacyl-tRNAs. Also deacylates mischarged glycyl-tRNA(Ala), protecting cells against glycine mischarging by AlaRS. Acts via tRNA-based rather than protein-based catalysis; rejects L-amino acids rather than detecting D-amino acids in the active site. By recycling D-aminoacyl-tRNA to D-amino acids and free tRNA molecules, this enzyme counteracts the toxicity associated with the formation of D-aminoacyl-tRNA entities in vivo and helps enforce protein L-homochirality. This is D-aminoacyl-tRNA deacylase from Clostridium botulinum (strain Loch Maree / Type A3).